A 368-amino-acid chain; its full sequence is MIALIIGILTSLIITLVGTPLLIRIVHKLNYGQYIRQDGPKSHQVKRGTPTLGGVVIVLAVVLGWCASALYRFCTTGARPTWAAILALFAMVSMGVLGFIDDFAKVRKKQNEGLTVGGKFFGQVVFATIFAVLALIVPTRSGFPVAQAGMSFIEKPFLSFEFAGRIVAIILFVIWVNFLMAAWTNAVNLSDGLDGLCAGSSMIAFVGYAIIAMWQMYHLKGQAHSGFTYAVSDPLDLGIIACCAAVACLGFLWYNCNPASIFMGDTGSLALGGLFAALSIITHTEFLAMIIGGLFVVETLSDVIQVGYFKATHKRVFKMAPIHHHFELCGWSESKVVVRFWIVELMFVITGLIIFYGNWVGLSGLWHH.

10 helical membrane passes run 2–22 (IALIIGILTSLIITLVGTPLL), 51–71 (TLGGVVIVLAVVLGWCASALY), 80–100 (PTWAAILALFAMVSMGVLGFI), 116–136 (VGGKFFGQVVFATIFAVLALI), 166–186 (IVAIILFVIWVNFLMAAWTNA), 193–213 (LDGLCAGSSMIAFVGYAIIAM), 234–254 (PLDLGIIACCAAVACLGFLWY), 256–276 (CNPASIFMGDTGSLALGGLFA), 277–297 (ALSIITHTEFLAMIIGGLFVV), and 340–360 (FWIVELMFVITGLIIFYGNWV).

It belongs to the glycosyltransferase 4 family. MraY subfamily. Mg(2+) is required as a cofactor.

It is found in the cell membrane. It carries out the reaction UDP-N-acetyl-alpha-D-muramoyl-L-alanyl-gamma-D-glutamyl-meso-2,6-diaminopimeloyl-D-alanyl-D-alanine + di-trans,octa-cis-undecaprenyl phosphate = di-trans,octa-cis-undecaprenyl diphospho-N-acetyl-alpha-D-muramoyl-L-alanyl-D-glutamyl-meso-2,6-diaminopimeloyl-D-alanyl-D-alanine + UMP. It participates in cell wall biogenesis; peptidoglycan biosynthesis. Functionally, catalyzes the initial step of the lipid cycle reactions in the biosynthesis of the cell wall peptidoglycan: transfers peptidoglycan precursor phospho-MurNAc-pentapeptide from UDP-MurNAc-pentapeptide onto the lipid carrier undecaprenyl phosphate, yielding undecaprenyl-pyrophosphoryl-MurNAc-pentapeptide, known as lipid I. This is Phospho-N-acetylmuramoyl-pentapeptide-transferase from Bifidobacterium animalis subsp. lactis (strain AD011).